Consider the following 285-residue polypeptide: 3-methyl-2-oxobutanoate hydroxymethyltransferase (285 aa).

A disordered region spans residues 1 to 23 (MSEHNVYGAAQPAQPAQPAQPRT). The segment covering 9–21 (AAQPAQPAQPAQP) has biased composition (low complexity). 2 residues coordinate Mg(2+): D66 and D105. Residues 66–67 (DS), D105, and K135 contribute to the 3-methyl-2-oxobutanoate site. E137 contributes to the Mg(2+) binding site. E203 acts as the Proton acceptor in catalysis.

It belongs to the PanB family. Homodecamer; pentamer of dimers. Requires Mg(2+) as cofactor.

Its subcellular location is the cytoplasm. The enzyme catalyses 3-methyl-2-oxobutanoate + (6R)-5,10-methylene-5,6,7,8-tetrahydrofolate + H2O = 2-dehydropantoate + (6S)-5,6,7,8-tetrahydrofolate. It functions in the pathway cofactor biosynthesis; (R)-pantothenate biosynthesis; (R)-pantoate from 3-methyl-2-oxobutanoate: step 1/2. Catalyzes the reversible reaction in which hydroxymethyl group from 5,10-methylenetetrahydrofolate is transferred onto alpha-ketoisovalerate to form ketopantoate. In Mycobacterium avium (strain 104), this protein is 3-methyl-2-oxobutanoate hydroxymethyltransferase.